Here is a 1483-residue protein sequence, read N- to C-terminus: Protein ORF C (1483 aa).

8 disordered regions span residues 135-268, 306-334, 383-506, 518-653, 680-911, 949-976, 1013-1061, and 1089-1299; these read LNDR…GRPP, VPYQ…LRPV, RRRA…FKRH, SIDD…DRNR, RQRR…TSVS, SSDD…RGGS, ALQQ…TDLI, and FSVA…QPSD. The span at 141–153 shows a compositional bias: low complexity; it reads AAGSAQRGSAGSR. Polar residues predominate over residues 157–170; the sequence is DNLTPTAADTTGAQ. Low complexity-rich tracts occupy residues 190–206 and 220–251; these read ASNV…RRQQ and ARQQ…TTAT. Residues 252–264 are compositionally biased toward polar residues; the sequence is RQVFEQQGPSTIQ. 3 stretches are compositionally biased toward low complexity: residues 424 to 449, 474 to 483, and 529 to 541; these read SGQS…TTGT, SNEPSRQSQS, and TMTQ…STTR. A compositionally biased stretch (polar residues) spans 596–607; it reads GSVTTTQPSGQL. The span at 609–621 shows a compositional bias: basic and acidic residues; the sequence is SDDRGRPAPERRQ. The segment covering 622–640 has biased composition (polar residues); sequence QPTSRQTVAQTNIIPNTSG. Residues 680 to 689 are compositionally biased toward basic and acidic residues; it reads RQRRETEAEH. The segment covering 699-710 has biased composition (polar residues); that stretch reads TGVTPQRSNNPF. The span at 740–749 shows a compositional bias: basic and acidic residues; that stretch reads SLREYRRRDP. The segment covering 754 to 774 has biased composition (low complexity); that stretch reads GRSYTDGSTTSDGDSSDNSWS. Residues 841 to 876 are compositionally biased toward polar residues; sequence NLKSPSPRTKLTRSSSLKSPGTTTRDTQQTSHPLTR. Low complexity predominate over residues 894–909; that stretch reads DSGGSSDGNTGSSQTS. Polar residues-rich tracts occupy residues 1096–1109 and 1116–1125; these read GSTS…SSIP and GPSTMTSQSV. Residues 1148-1158 are compositionally biased toward low complexity; that stretch reads SQSQPSSEQPA. The segment covering 1188-1202 has biased composition (polar residues); the sequence is QPQSTVTNTQTQDVL. Composition is skewed to low complexity over residues 1204 to 1226 and 1233 to 1251; these read SQGS…KTGS and KSAL…SGKS. Positions 1258-1276 are enriched in polar residues; it reads AASSTDPTTKPTRKVSINA. A compositionally biased stretch (low complexity) spans 1284 to 1299; the sequence is KSSTKQSTKTSTQPSD. Residues 1408-1438 adopt a coiled-coil conformation; the sequence is AEQIRNLEVDELKILRQQVRERIANERQQQD. The interval 1454-1483 is disordered; the sequence is DMLVSEESAAPTPLPMDTGRFTPKSDVDMS.

The chain is Protein ORF C from Elephantid herpesvirus 1 (isolate Asian elephant/Berlin/Kiba/1998) (EIHV-1).